Reading from the N-terminus, the 88-residue chain is Class I hydrophobin F (88 aa).

The signal sequence occupies residues 1–21 (MLSRLFTVPAILLATLGSAAT). Cystine bridges form between C30/C67, C34/C58, C35/C51, and C68/C84.

This sequence belongs to the fungal hydrophobin family.

It localises to the secreted. Its subcellular location is the cell wall. It is found in the vacuole. The protein localises to the cytoplasmic vesicle. Aerial growth, conidiation, and dispersal of filamentous fungi in the environment rely upon a capability of their secreting small amphipathic proteins called hydrophobins (HPBs) with low sequence identity. Class I can self-assemble into an outermost layer of rodlet bundles on aerial cell surfaces, conferring cellular hydrophobicity that supports fungal growth, development and dispersal; whereas Class II form highly ordered films at water-air interfaces through intermolecular interactions but contribute nothing to the rodlet structure. Hyd1F contributes to certain cell wall-related features, such as hydrophobicity but is not involved in cell wall-related events during fungal proliferation in host hemocoel. Does not contribute to conidial hydrophobicity. The protein is Class I hydrophobin F of Beauveria bassiana (strain ARSEF 2860) (White muscardine disease fungus).